The following is a 177-amino-acid chain: Large ribosomal subunit protein uL6 (177 aa).

The protein belongs to the universal ribosomal protein uL6 family. As to quaternary structure, part of the 50S ribosomal subunit.

Its function is as follows. This protein binds to the 23S rRNA, and is important in its secondary structure. It is located near the subunit interface in the base of the L7/L12 stalk, and near the tRNA binding site of the peptidyltransferase center. The chain is Large ribosomal subunit protein uL6 from Rickettsia conorii (strain ATCC VR-613 / Malish 7).